The chain runs to 320 residues: Dipeptide transport system permease protein DppC (320 aa).

6 consecutive transmembrane segments (helical) span residues 56–76 (LAMAGLFILLFLFVMAVIGPF), 121–141 (LFVGVMAALIDFLIGVIYGGV), 154–176 (MRIIEVLYGLPYLLVVILLMVLM), 230–252 (LLPNTMGAIIVQMTLTVPAAIFA), 267–287 (FASWGVMANDGLPTILSGHWW), and 289–309 (LFFPAFFISLTMYAFNVLGDG). Positions 117 to 307 (ARISLFVGVM…LTMYAFNVLG (191 aa)) constitute an ABC transmembrane type-1 domain.

Belongs to the binding-protein-dependent transport system permease family. OppBC subfamily.

It localises to the cell membrane. In terms of biological role, probably part of the ABC transporter DppBCDE involved in dipeptide transport. Responsible for the translocation of the substrate across the membrane. This chain is Dipeptide transport system permease protein DppC (dppC), found in Bacillus subtilis (strain 168).